Consider the following 271-residue polypeptide: 3-methyl-2-oxobutanoate hydroxymethyltransferase (271 aa).

The Mg(2+) site is built by Asp-53 and Asp-92. 3-methyl-2-oxobutanoate-binding positions include Asp-53–Ser-54, Asp-92, and Lys-120. Residue Glu-122 participates in Mg(2+) binding. The active-site Proton acceptor is the Glu-189.

This sequence belongs to the PanB family. As to quaternary structure, homodecamer; pentamer of dimers. Mg(2+) serves as cofactor.

The protein localises to the cytoplasm. It catalyses the reaction 3-methyl-2-oxobutanoate + (6R)-5,10-methylene-5,6,7,8-tetrahydrofolate + H2O = 2-dehydropantoate + (6S)-5,6,7,8-tetrahydrofolate. The protein operates within cofactor biosynthesis; (R)-pantothenate biosynthesis; (R)-pantoate from 3-methyl-2-oxobutanoate: step 1/2. In terms of biological role, catalyzes the reversible reaction in which hydroxymethyl group from 5,10-methylenetetrahydrofolate is transferred onto alpha-ketoisovalerate to form ketopantoate. The sequence is that of 3-methyl-2-oxobutanoate hydroxymethyltransferase from Burkholderia vietnamiensis (strain G4 / LMG 22486) (Burkholderia cepacia (strain R1808)).